Here is a 149-residue protein sequence, read N- to C-terminus: Transcriptional repressor NrdR (149 aa).

Residues 3 to 34 fold into a zinc finger; that stretch reads CPFCSATDTKVIDSRLVADGHQVRRRRECAEC. The ATP-cone domain occupies 49–139; it reads PRVVKQDGSR…VYRAFEDVSE (91 aa).

This sequence belongs to the NrdR family. Requires Zn(2+) as cofactor.

Its function is as follows. Negatively regulates transcription of bacterial ribonucleotide reductase nrd genes and operons by binding to NrdR-boxes. This chain is Transcriptional repressor NrdR, found in Shewanella woodyi (strain ATCC 51908 / MS32).